The sequence spans 253 residues: Vitamin B12 import ATP-binding protein BtuD (253 aa).

One can recognise an ABC transporter domain in the interval 3 to 237 (LDAKNLAMPP…EQLESTFATQ (235 aa)). ATP is bound at residue 31–38 (GPNGSGKS).

It belongs to the ABC transporter superfamily. Vitamin B12 importer (TC 3.A.1.13.1) family. The complex is composed of two ATP-binding proteins (BtuD), two transmembrane proteins (BtuC) and a solute-binding protein (BtuF).

Its subcellular location is the cell inner membrane. It carries out the reaction an R-cob(III)alamin(out) + ATP + H2O = an R-cob(III)alamin(in) + ADP + phosphate + H(+). Its function is as follows. Part of the ABC transporter complex BtuCDF involved in vitamin B12 import. Responsible for energy coupling to the transport system. This Photobacterium profundum (strain SS9) protein is Vitamin B12 import ATP-binding protein BtuD.